A 359-amino-acid chain; its full sequence is MAHYKGAASEAGRAAQLMKKREIQQQEIEFRKKKIEEELKLDKIENKFATHYDAVEQQLKSSTIGLVTLDEMKAKQEDIVREREKKLAQKKDEKDREKQRALEAIQAEKNKQKRQIQALSFNLDDDEEEEEEDDEDHDKKQLKIKQEDQPKPKWTEIKEDILPIKKKKICKNPDVDTSFLPDREREEQENRLREQLRQEWVMQQAELKDEDISITFSYWDGSGHRRNVLMKKGNSIYQFLQKCLELLRKEFIELKTVMADQLMYVKEDLILPHHYSFYDFIVTKARGKSGPLFQFDVHDDVRMISDASVEKEESHAGKVLLRSWYERNKHIFPASRWEPYDPTKSYDKYTIKDKDKSKK.

Disordered regions lie at residues 122-150 (NLDD…EDQP) and 339-359 (PYDP…KSKK). A compositionally biased stretch (acidic residues) spans 123-136 (LDDDEEEEEEDDED). Over residues 137–150 (HDKKQLKIKQEDQP) the composition is skewed to basic and acidic residues.

It belongs to the FAM50 family.

This Drosophila melanogaster (Fruit fly) protein is Protein FAM50 homolog.